We begin with the raw amino-acid sequence, 229 residues long: ATP synthase subunit a (229 aa).

6 consecutive transmembrane segments (helical) span residues 25 to 45, 82 to 102, 104 to 124, 142 to 162, 181 to 201, and 202 to 222; these read ADAV…SIAA, FFPL…IGLV, GFFP…VVFV, FLGP…IGHL, LVLI…MMLM, and GVLV…IYIQ.

Belongs to the ATPase A chain family. F-type ATPases have 2 components, CF(1) - the catalytic core - and CF(0) - the membrane proton channel. CF(1) has five subunits: alpha(3), beta(3), gamma(1), delta(1), epsilon(1). CF(0) has three main subunits: a(1), b(2) and c(9-12). The alpha and beta chains form an alternating ring which encloses part of the gamma chain. CF(1) is attached to CF(0) by a central stalk formed by the gamma and epsilon chains, while a peripheral stalk is formed by the delta and b chains.

Its subcellular location is the cell inner membrane. Its function is as follows. Key component of the proton channel; it plays a direct role in the translocation of protons across the membrane. This chain is ATP synthase subunit a, found in Citrifermentans bemidjiense (strain ATCC BAA-1014 / DSM 16622 / JCM 12645 / Bem) (Geobacter bemidjiensis).